The following is a 723-amino-acid chain: DNA-binding protein RFX2 (723 aa).

The interval 1–46 (MQNSEGGADSPASVALRPSAAAPPVPASPQRVLVQAASSAPKGAQM) is disordered. Residues 10–20 (SPASVALRPSA) are compositionally biased toward low complexity. S28 carries the phosphoserine modification. The segment at residues 199 to 274 (HLQWLLDNYE…YHYYGIRLKP (76 aa)) is a DNA-binding region (RFX-type winged-helix). The segment at 292–332 (QQPMHQKPRYRPAQKTDSLGDSGSHSSLHSTPEQTMAAQSQ) is disordered. The segment covering 307-322 (TDSLGDSGSHSSLHST) has biased composition (low complexity). The segment covering 323 to 332 (PEQTMAAQSQ) has biased composition (polar residues). S416 is subject to Phosphoserine. The disordered stretch occupies residues 689 to 723 (GDERRGSEAGPDAHSLGEPLVKRERSDPNHSLQGI).

The protein belongs to the RFX family. Homodimer; probably only forms homodimers in testis. Heterodimer; heterodimerizes with RFX1 and RFX3.

It localises to the nucleus. The protein resides in the cytoplasm. Functionally, transcription factor that acts as a key regulator of spermatogenesis. Acts by regulating expression of genes required for the haploid phase during spermiogenesis, such as genes required for cilium assembly and function. Recognizes and binds the X-box, a regulatory motif with DNA sequence 5'-GTNRCC(0-3N)RGYAAC-3' present on promoters. Probably activates transcription of the testis-specific histone gene H1-6. The polypeptide is DNA-binding protein RFX2 (RFX2) (Macaca fascicularis (Crab-eating macaque)).